The primary structure comprises 231 residues: MAKDTTGRMHVQVKTGGKRKLSSKLWLERQLNDPYVAQAKRDGYRSRATYKLIEIDDKYHMLKPGMTVVDLGAAPGGWSQIAARRVGAEAGKGKVVAIDLLEMGEIPGVTFAQLDFHAQDAPEKLRTMIGGRADVVMSDMAANTTGHRKTDQLRIVGLVELAAHFAGEVLKPGGSFLAKTFQSGADAELLAQLKRDYATVRHVKPAASRQDSSERYVLAMGFRGGEQADLL.

Residues Gly76, Trp78, Asp99, Asp115, and Asp139 each contribute to the S-adenosyl-L-methionine site. Lys179 (proton acceptor) is an active-site residue.

This sequence belongs to the class I-like SAM-binding methyltransferase superfamily. RNA methyltransferase RlmE family.

It is found in the cytoplasm. The enzyme catalyses uridine(2552) in 23S rRNA + S-adenosyl-L-methionine = 2'-O-methyluridine(2552) in 23S rRNA + S-adenosyl-L-homocysteine + H(+). Specifically methylates the uridine in position 2552 of 23S rRNA at the 2'-O position of the ribose in the fully assembled 50S ribosomal subunit. The chain is Ribosomal RNA large subunit methyltransferase E from Bradyrhizobium sp. (strain ORS 278).